The chain runs to 356 residues: MSIDSALNWDGEMTVTRFDRETGAHFVIRLDSTQLGPAAGGTRAAQYSQLADALTDAGKLAGAMTLKMAVSNLPMGGGKSVIALPAPRHSIDPSTWARILRIHAENIDKLSGNYWTGPDVNTNSADMDTLNDTTEFVFGRSLERGGAGSSAFTTAVGVFEAMKATVAHRGLGSLDGLTVLVQGLGAVGGSLASLAAEAGAQLLVADTDTERVAHAVALGHTAVALEDVLSTPCDVFAPCAMGGVITTEVARTLDCSVVAGAANNVIADEAASDILHARGILYAPDFVANAGGAIHLVGREVLGWSESVVHERAVAIGDTLNQVFEISDNDGVTPDEAARTLAGRRAREASTTTATA.

NAD(+) is bound at residue arginine 43. Lysine 67 serves as a coordination point for L-phenylalanine. The active-site Proton donor/acceptor is lysine 79. Position 118–119 (proline 118–aspartate 119) interacts with L-phenylalanine. NAD(+) is bound by residues aspartate 119, serine 150, threonine 154, glycine 183–glycine 189, aspartate 206–threonine 207, arginine 211, alanine 240–methionine 241, and alanine 261–asparagine 263. Asparagine 263 contributes to the L-phenylalanine binding site.

Belongs to the Glu/Leu/Phe/Val dehydrogenases family. Homotetramer, dimer of dimers.

It carries out the reaction L-phenylalanine + NAD(+) + H2O = 3-phenylpyruvate + NH4(+) + NADH + H(+). It participates in amino-acid biosynthesis; L-phenylalanine biosynthesis; L-phenylalanine from phenylpyruvate (PDH route): step 1/1. Its activity is regulated as follows. Subject to competitive inhibition by 3-phenylpropionate for the conversion of L-phenylalanine to phenylpyruvate. Subject to competitive inhibition by D-phenylalanine for the conversion of phenylpyruvate to L-phenylalanine. Functionally, catalyzes the reversible NAD(+)-dependent oxidative deamination of L-phenylalanine to phenylpyruvate. The protein is Phenylalanine dehydrogenase of Rhodococcus sp.